Consider the following 158-residue polypeptide: Small ribosomal subunit protein uS17 (158 aa).

N-acetylalanine is present on A2. A Citrulline modification is found at R22. 3 positions are modified to N6-acetyllysine: K38, K45, and K58. Residue C60 is the site of S-palmitoyl cysteine attachment. S67 bears the Phosphoserine mark. Residue R69 is modified to Omega-N-methylarginine. At S110 the chain carries Phosphoserine.

This sequence belongs to the universal ribosomal protein uS17 family. In terms of assembly, component of the small ribosomal subunit. Part of the small subunit (SSU) processome, composed of more than 70 proteins and the RNA chaperone small nucleolar RNA (snoRNA) U3. Citrullinated by PADI4.

The protein resides in the cytoplasm. Its subcellular location is the nucleus. It localises to the nucleolus. Its function is as follows. Component of the small ribosomal subunit. The ribosome is a large ribonucleoprotein complex responsible for the synthesis of proteins in the cell. Part of the small subunit (SSU) processome, first precursor of the small eukaryotic ribosomal subunit. During the assembly of the SSU processome in the nucleolus, many ribosome biogenesis factors, an RNA chaperone and ribosomal proteins associate with the nascent pre-rRNA and work in concert to generate RNA folding, modifications, rearrangements and cleavage as well as targeted degradation of pre-ribosomal RNA by the RNA exosome. In Mus musculus (Mouse), this protein is Small ribosomal subunit protein uS17 (Rps11).